A 396-amino-acid chain; its full sequence is MHSLISSDDVWVLWGFIAVWAAVSIGLEQRFKWASAVSGAIIALAGAMVFTNVGVLPVESPVYDTVWSYVVPLAIPLLLFQINVRQIFKESRRLLFIFLISSVGTVLGSILAFFLLKQHIPYLDKIGGMISASYIGGGVNFAAMAAKFETPGEYVSATVVADNFMMALLFFILISIPALKWFQRHYAMPFEEKVKADGNSGNSAESYWKRKDISLKDIAFNAGAAFALVAVSMKVSGYFKSIFSHPLLTGTLGDQYLVLTSLTVLIIFLFPRFFERLNGSQELGTFLIYLFFVVIGIPADLRLIVTNAPLILLFVFIIAISNLAVSLAAGKLFRVRLEEILLAVNATVGGPTTAAAMAIAKGWRELVAPIMLVGTLGYLIGNYVGTFMGNWFSSFL.

Helical transmembrane passes span Ser-7–Leu-27, Ala-36–Leu-56, Val-62–Ile-82, Leu-94–Phe-114, Val-159–Leu-179, Ile-218–Tyr-238, Gly-250–Phe-270, Thr-285–Val-305, Leu-310–Gly-330, Ile-340–Ala-360, and Val-367–Phe-387.

The protein localises to the cell membrane. This is an uncharacterized protein from Bacillus subtilis (strain 168).